The chain runs to 551 residues: Eukaryotic translation initiation factor 3 subunit D-2 (551 aa).

The segment at 105–152 is disordered; the sequence is NNVRARGRTGRGSQAVGGPGGPAAGGSTANSTKYGKGRNTRNTQNVGR. Residues 119–128 show a composition bias toward gly residues; the sequence is AVGGPGGPAA. The tract at residues 290-304 is RNA gate; it reads QFDLLTVNETSLEPP.

This sequence belongs to the eIF-3 subunit D family. As to quaternary structure, component of the eukaryotic translation initiation factor 3 (eIF-3) complex. The eIF-3 complex interacts with pix.

Its subcellular location is the cytoplasm. Functionally, mRNA cap-binding component of the eukaryotic translation initiation factor 3 (eIF-3) complex, which is involved in protein synthesis of a specialized repertoire of mRNAs and, together with other initiation factors, stimulates binding of mRNA and methionyl-tRNAi to the 40S ribosome. The eIF-3 complex specifically targets and initiates translation of a subset of mRNAs involved in cell proliferation. In the eIF-3 complex, eif3d specifically recognizes and binds the 7-methylguanosine cap of a subset of mRNAs. The sequence is that of Eukaryotic translation initiation factor 3 subunit D-2 from Drosophila erecta (Fruit fly).